Reading from the N-terminus, the 241-residue chain is MRIPLLAPDNYAFPDPAYALAWCDGLVGVSGDLDAGRLLEAYRNGVFPWFSRDGWFFWYAVGPRAVIVPERLHVPRSLAKTLRNGSYRVAVNGCFAEVVAHCAAAARPNQDGTWIAPEFQTAYLKLHEMGHAHSFECHYPDESGETRLAGGFYGVQIGRVFYGESMFALQPDASKIAFACAVPFLADLGVELIDCQQDTEHMRRFGSELLPFADFAERLRMLNAVPLKEEIGRREVVCKGL.

The protein belongs to the L/F-transferase family.

It localises to the cytoplasm. It carries out the reaction N-terminal L-lysyl-[protein] + L-leucyl-tRNA(Leu) = N-terminal L-leucyl-L-lysyl-[protein] + tRNA(Leu) + H(+). The catalysed reaction is N-terminal L-arginyl-[protein] + L-leucyl-tRNA(Leu) = N-terminal L-leucyl-L-arginyl-[protein] + tRNA(Leu) + H(+). The enzyme catalyses L-phenylalanyl-tRNA(Phe) + an N-terminal L-alpha-aminoacyl-[protein] = an N-terminal L-phenylalanyl-L-alpha-aminoacyl-[protein] + tRNA(Phe). Its function is as follows. Functions in the N-end rule pathway of protein degradation where it conjugates Leu, Phe and, less efficiently, Met from aminoacyl-tRNAs to the N-termini of proteins containing an N-terminal arginine or lysine. The chain is Leucyl/phenylalanyl-tRNA--protein transferase from Neisseria meningitidis serogroup C (strain 053442).